The sequence spans 455 residues: Major facilitator superfamily domain-containing protein 10 (455 aa).

A run of 11 helical transmembrane segments spans residues 27 to 47 (VVFL…PLLP), 86 to 106 (VLFG…CAPL), 113 to 135 (CLGR…AVWA), 148 to 168 (LIGG…ADLG), 176 to 196 (GMAV…MLGA), 202 to 222 (MAPW…FCFL), 275 to 295 (LGLV…TLSF), 310 to 327 (KMFF…GAYA), 336 to 356 (VAAV…IGWG), 359 to 379 (LPVL…VVPC), and 421 to 441 (LAGA…PFFL).

It belongs to the major facilitator superfamily. In terms of tissue distribution, expressed in luminal membrane of renal tubules (at protein level). Detected in all tissues tested with higher expression in heart, splee, kidney, leukocytes and prostate.

The protein resides in the nucleus inner membrane. Its subcellular location is the cell membrane. In terms of biological role, probable organic anion transporter which may serve as a transporter for some non-steroidal anti-inflammatory drugs (NSAIDs) as well as other organic anions across the luminal membranes of renal proximal tubules at the final excretion step into the urine. The chain is Major facilitator superfamily domain-containing protein 10 (MFSD10) from Homo sapiens (Human).